A 212-amino-acid polypeptide reads, in one-letter code: Pyridoxine/pyridoxamine 5'-phosphate oxidase (212 aa).

Residues 59-64, 74-75, Lys81, and Gln103 contribute to the FMN site; these read RMVLMK and YS. Lys64 contributes to the substrate binding site. Substrate-binding residues include Tyr121 and Arg125. FMN is bound by residues 138–139 and Trp183; that span reads QS. 189 to 191 is a binding site for substrate; sequence RLH. Residue Arg193 coordinates FMN.

Belongs to the pyridoxamine 5'-phosphate oxidase family. In terms of assembly, homodimer. FMN serves as cofactor.

The catalysed reaction is pyridoxamine 5'-phosphate + O2 + H2O = pyridoxal 5'-phosphate + H2O2 + NH4(+). The enzyme catalyses pyridoxine 5'-phosphate + O2 = pyridoxal 5'-phosphate + H2O2. Its pathway is cofactor metabolism; pyridoxal 5'-phosphate salvage; pyridoxal 5'-phosphate from pyridoxamine 5'-phosphate: step 1/1. It participates in cofactor metabolism; pyridoxal 5'-phosphate salvage; pyridoxal 5'-phosphate from pyridoxine 5'-phosphate: step 1/1. Its function is as follows. Catalyzes the oxidation of either pyridoxine 5'-phosphate (PNP) or pyridoxamine 5'-phosphate (PMP) into pyridoxal 5'-phosphate (PLP). The chain is Pyridoxine/pyridoxamine 5'-phosphate oxidase from Rhodopseudomonas palustris (strain BisB5).